A 419-amino-acid chain; its full sequence is CinA-like protein (419 aa).

This sequence belongs to the CinA family.

The chain is CinA-like protein from Parasynechococcus marenigrum (strain WH8102).